A 492-amino-acid chain; its full sequence is MRLATAANEAYTAPLAVSELLGCKQCGGGRDHDEELGIRIPRPLGQGPSRFIPEKEILQVGSEDAQMHALFADSFAALGRLDNITLVMVFHPQYLESFLKTQHYLLQMDGPLPLHYRHYIGIMAAARHQCSYLVNLHVNDFLHVGGDPKWLNGLENAPQKLQNLGELNKVLAHRPWLITKEHIEGLLKAEEHSWSLAELVHAVVLLTHYHSLASFTFGCGISPEIHCDGGHTFRPPSVSNYCICDITNGNHSVDEMPVNSAENVSVSDSFFEVEALMEKMRQLQECRDEEEASQEEMASRFEIEKRESMFVFSSDDDEVTPARDVSRHFEDTSYGYKDFSRHGMHVPTFRVQDYCWEDHGYSLVNRLYPDVGQLIDEKFHIAYNLTYNTMAMHKDVDTSMLRRAIWNYIHCMFGIRYDDYDYGEINQLLDRSFKVYIKTVVCTPEKVTKRMYESFWRQFKHSEKVHVNLLLIEARMQAELLYALRAITRYMT.

Positions 71 to 252 (FADSFAALGR…ICDITNGNHS (182 aa)) are N-terminal domain; may mediate the alkylhydroperoxide reductase activity. The active-site Cysteine sulfenic acid (-SOH) intermediate is the C130. Phosphoserine is present on residues S293 and S314. The segment at 321-492 (PARDVSRHFE…ALRAITRYMT (172 aa)) is C-terminal domain; mediates TORC1 regulation. L-leucine contacts are provided by residues 386–389 (TYNT), T398, and E463.

It belongs to the sestrin family. As to quaternary structure, interacts with the GATOR2 complex which is composed of MIOS, SEC13, SEH1L, WDR24 and WDR59; the interaction is negatively regulated by leucine. Interacts with RRAGA, RRAGB, RRAGC and RRAGD; may function as a guanine nucleotide dissociation inhibitor for RRAGs and regulate them. Interacts with KEAP1, RBX1 and SQSTM1; in the SQSTM1-dependent autophagic degradation of KEAP1. May interact with PRDX1.

It is found in the nucleus. The protein resides in the cytoplasm. The enzyme catalyses a hydroperoxide + L-cysteinyl-[protein] = S-hydroxy-L-cysteinyl-[protein] + an alcohol. Functions as an intracellular leucine sensor that negatively regulates the TORC1 signaling pathway through the GATOR complex. In absence of leucine, binds the GATOR subcomplex GATOR2 and prevents TORC1 signaling. Binding of leucine to SESN2 disrupts its interaction with GATOR2 thereby activating the TORC1 signaling pathway. This stress-inducible metabolic regulator may also play a role in protection against oxidative and genotoxic stresses. May positively regulate the transcription by NFE2L2 of genes involved in the response to oxidative stress by facilitating the SQSTM1-mediated autophagic degradation of KEAP1. Moreover, may prevent the accumulation of reactive oxygen species (ROS) through the alkylhydroperoxide reductase activity born by the N-terminal domain of the protein. Was originally reported to contribute to oxidative stress resistance by reducing PRDX1. However, this could not be confirmed. In Macaca fascicularis (Crab-eating macaque), this protein is Sestrin-1.